A 611-amino-acid polypeptide reads, in one-letter code: Oxidoreductase cicC (611 aa).

The first 20 residues, 1 to 20, serve as a signal peptide directing secretion; that stretch reads MALRYLNKFSLLSLAVPTLA. Residues 45-46 and 65-66 each bind FAD; these read NA and EA. Asparagine 76 and asparagine 113 each carry an N-linked (GlcNAc...) asparagine glycan. FAD contacts are provided by residues valine 123 and 131 to 134; that span reads NLMT. Asparagine 282, asparagine 410, and asparagine 475 each carry an N-linked (GlcNAc...) asparagine glycan. Histidine 547 functions as the Proton acceptor in the catalytic mechanism. Histidine 547 serves as the catalytic Proton donor. Alanine 581 serves as a coordination point for FAD. The Proton acceptor role is filled by histidine 591. 592-593 provides a ligand contact to FAD; sequence PI.

This sequence belongs to the GMC oxidoreductase family. FAD is required as a cofactor.

Its pathway is phytotoxin biosynthesis. In terms of biological role, oxidoreductase; part of the gene cluster that mediates the biosynthesis of cichorine, a phytotoxin active against knapweed, corn, and soybeans. The first step in the pathway is performed by the non-reducing polyketide synthase pkbA that condenses one acetyl-CoA starter unit with 3 malonyl-CoA units. PkbA also catalyzes one methylation step to produce 3-methylorsellinate. The nonribosomal peptide synthase-like protein cicB, the cytochrome P450 monooxygenase cicH and the O-methyltransferase cicE are involved in the conversion of 3-methylorsellinate into nidulol. CicB converts 3-methylorsellinate to a yet unidentified intermediate, cicH may play a ring-closing role for cichorine and cicE is plausibly responsible for the methylation of one of the phenol groups. The oxidoreductase cicC acts downstream with still unidentified enzymes to further convert nidulol into cichorine. The sequence is that of Oxidoreductase cicC from Emericella nidulans (strain FGSC A4 / ATCC 38163 / CBS 112.46 / NRRL 194 / M139) (Aspergillus nidulans).